The chain runs to 405 residues: Phosphopentomutase (405 aa).

Positions 10, 303, 308, 344, 345, and 356 each coordinate Mn(2+).

This sequence belongs to the phosphopentomutase family. Requires Mn(2+) as cofactor.

It localises to the cytoplasm. The catalysed reaction is 2-deoxy-alpha-D-ribose 1-phosphate = 2-deoxy-D-ribose 5-phosphate. It catalyses the reaction alpha-D-ribose 1-phosphate = D-ribose 5-phosphate. The protein operates within carbohydrate degradation; 2-deoxy-D-ribose 1-phosphate degradation; D-glyceraldehyde 3-phosphate and acetaldehyde from 2-deoxy-alpha-D-ribose 1-phosphate: step 1/2. In terms of biological role, isomerase that catalyzes the conversion of deoxy-ribose 1-phosphate (dRib-1-P) and ribose 1-phosphate (Rib-1-P) to deoxy-ribose 5-phosphate (dRib-5-P) and ribose 5-phosphate (Rib-5-P), respectively. This chain is Phosphopentomutase, found in Shewanella woodyi (strain ATCC 51908 / MS32).